The chain runs to 203 residues: Pacifastin-like protease inhibitor cvp4 (203 aa).

Residues 1 to 19 form the signal peptide; sequence MGFLACALLVVATAHAATA. 3 Pacifastin domains span residues 23-59, 85-121, and 147-184; these read PETCEIGSNFKNYCNNCYCFDGVMDHALCTRESCDRN, DEPCTPGENFKYYCNDCQCLDGLRAHAMCTRMRCDRN, and DESCAPGASFKYYCNSCTCGAEGKVAEAQCTSQECDRY. Intrachain disulfides connect cysteine 26–cysteine 41, cysteine 36–cysteine 56, cysteine 39–cysteine 51, cysteine 88–cysteine 103, cysteine 98–cysteine 118, and cysteine 101–cysteine 113. The span at 129-148 shows a compositional bias: basic and acidic residues; that stretch reads RKYPEPEKWNSEKERKKSDE. Residues 129-150 form a disordered region; the sequence is RKYPEPEKWNSEKERKKSDESC. 3 disulfides stabilise this stretch: cysteine 150/cysteine 165, cysteine 160/cysteine 181, and cysteine 163/cysteine 176.

Belongs to the protease inhibitor I19 family. Expressed by the venom gland.

Its subcellular location is the secreted. In terms of biological role, inhibits trypsin activity and prophenoloxidase (PPO) activation, an enzyme essential for both clotting and insect innate immune responses. It does not inhibit activity of chymotrypsin and protease K, and has no effect on phenoloxidase (PO) activity. This is Pacifastin-like protease inhibitor cvp4 from Pimpla hypochondriaca (Parasitoid wasp).